Here is a 446-residue protein sequence, read N- to C-terminus: Glutamine synthetase (446 aa).

The region spanning 15 to 102 (RDIRFVRLWF…MFCDITMPDG (88 aa)) is the GS beta-grasp domain. A GS catalytic domain is found at 109-446 (PRHVLRRQLT…PYELRTYLSL (338 aa)). Mg(2+) is bound by residues glutamate 132 and glutamate 134. Glutamate 184 lines the ATP pocket. The Mg(2+) site is built by glutamate 189 and glutamate 196. An L-glutamate-binding site is contributed by glycine 241. Histidine 245 serves as a coordination point for Mg(2+). ATP is bound by residues 247-249 (HMS) and serine 249. Positions 298, 304, and 316 each coordinate L-glutamate. ATP-binding residues include arginine 316 and arginine 321. Residue glutamate 336 participates in Mg(2+) binding. Position 338 (arginine 338) interacts with L-glutamate.

The protein belongs to the glutamine synthetase family. As to quaternary structure, oligomer of 12 subunits arranged in the form of two hexagons. In its feedback-inhibited form, interacts with TnrA in order to block its DNA-binding activity. Requires Mg(2+) as cofactor.

The protein resides in the cytoplasm. It catalyses the reaction L-glutamate + NH4(+) + ATP = L-glutamine + ADP + phosphate + H(+). With respect to regulation, inhibited by glutamine. Its function is as follows. Glutamine synthetase (GS) is an unusual multitasking protein that functions as an enzyme, a transcription coregulator, and a chaperone in ammonium assimilation and in the regulation of genes involved in nitrogen metabolism. It catalyzes the ATP-dependent biosynthesis of glutamine from glutamate and ammonia. Feedback-inhibited GlnA also interacts with and regulates the activity of the transcriptional regulator TnrA. During nitrogen limitation, TnrA is in its DNA-binding active state and turns on the transcription of genes required for nitrogen assimilation. Under conditions of nitrogen excess, feedback-inhibited GlnA forms a stable complex with TnrA, which inhibits its DNA-binding activity. In contrast, feedback-inhibited GlnA acts as a chaperone to stabilize the DNA-binding activity of GlnR, which represses the transcription of nitrogen assimilation genes. The sequence is that of Glutamine synthetase from Mycobacterium bovis (strain ATCC BAA-935 / AF2122/97).